We begin with the raw amino-acid sequence, 480 residues long: Glycogen synthase 1 (480 aa).

ADP-alpha-D-glucose is bound at residue Lys15.

This sequence belongs to the glycosyltransferase 1 family. Bacterial/plant glycogen synthase subfamily.

It catalyses the reaction [(1-&gt;4)-alpha-D-glucosyl](n) + ADP-alpha-D-glucose = [(1-&gt;4)-alpha-D-glucosyl](n+1) + ADP + H(+). The protein operates within glycan biosynthesis; glycogen biosynthesis. In terms of biological role, synthesizes alpha-1,4-glucan chains using ADP-glucose. The chain is Glycogen synthase 1 (glgA1) from Rhizobium radiobacter (Agrobacterium tumefaciens).